Here is a 143-residue protein sequence, read N- to C-terminus: Transcriptional regulator MraZ (143 aa).

2 consecutive SpoVT-AbrB domains span residues 5-47 (QYEH…SLDE) and 76-119 (AVEC…SKEV).

The protein belongs to the MraZ family. In terms of assembly, forms oligomers.

The protein resides in the cytoplasm. It localises to the nucleoid. This chain is Transcriptional regulator MraZ, found in Caldanaerobacter subterraneus subsp. tengcongensis (strain DSM 15242 / JCM 11007 / NBRC 100824 / MB4) (Thermoanaerobacter tengcongensis).